Reading from the N-terminus, the 363-residue chain is Dihydroorotate dehydrogenase (quinone) (363 aa).

FMN contacts are provided by residues alanine 62–lysine 66 and threonine 86. Lysine 66 is a substrate binding site. Asparagine 111 to phenylalanine 115 serves as a coordination point for substrate. Positions 139 and 170 each coordinate FMN. Asparagine 170 serves as a coordination point for substrate. Residue serine 173 is the Nucleophile of the active site. Asparagine 175 is a binding site for substrate. 2 residues coordinate FMN: lysine 215 and serine 243. Substrate is bound at residue asparagine 244–threonine 245. FMN is bound by residues glycine 266, glycine 295, and tyrosine 316–serine 317.

It belongs to the dihydroorotate dehydrogenase family. Type 2 subfamily. In terms of assembly, monomer. FMN is required as a cofactor.

It localises to the cell membrane. It catalyses the reaction (S)-dihydroorotate + a quinone = orotate + a quinol. Its pathway is pyrimidine metabolism; UMP biosynthesis via de novo pathway; orotate from (S)-dihydroorotate (quinone route): step 1/1. Functionally, catalyzes the conversion of dihydroorotate to orotate with quinone as electron acceptor. This is Dihydroorotate dehydrogenase (quinone) from Agrobacterium fabrum (strain C58 / ATCC 33970) (Agrobacterium tumefaciens (strain C58)).